We begin with the raw amino-acid sequence, 701 residues long: MVETDLMSSHSSNWKEIFRTHSIAQTIQLEKFVSQQIEEKGRELQQNVCFNYQSFIEASENLSNIRNNLEKVLQNSYEFQSMVSLPKVDRVSKFLSDNESISQTSGDYFIFLQRFYAHAILFVMELFNKEQYLQSSKLLIFCLRILPADLPNDHQCHILVNRLESCKNYLNNRLKQAMTSSLSKVSVVTSWILLNQANISSGLDIFLQECEDQLLILNDAREFSLTFLNTLKLARDFPNEIRSYLEASKNFNIFKEKEILRNICLDECYLKAYFSAEDVKVTTPFETLQQFDGDNILQQWKLSFFSKISHSEKSFFSNATSLTTLYQILEGLLSELSEPQFKEFYELWNSILQNHFIISSRNIIDSLGLYVNKIKEKLQICFEIPPTNSFDPWSFQLKQQVLNELKQNILPACGMDDGFQRFWQSLASFDMVLDESLQVLKKLQTLHLSFTLGDIIPNYLTLADYLLNFVKTSFAQIYELVCSFVNNVAVMESSSEKQLRTSRCLKIVRLLKQFRHMDESVPFDDLIYKLQNILVRELTDFTTGIYINESKINLDVAACITGNFFGPSFALYNSLIMLIDKLEVLGFDIVSDKFKGLLTPNLFESLFILNLERLKAAKSMDHMKQNTFDMEFINYLSDFTNNPREVIDYQHFIELIDLHVQDEFSKEDFDTVRANVKECVPKLLSFFTVLLPRVKAQKVIT.

It belongs to the COG1 family. As to quaternary structure, component of the conserved oligomeric Golgi (COG) complex which consists of eight different proteins cog1-cog8.

The protein resides in the cytoplasm. Its subcellular location is the nucleus. The protein localises to the golgi apparatus membrane. Functionally, acts as essential component of the peripheral membrane COG complex that is involved in intra-Golgi protein trafficking. COG is located at the cis-Golgi, and regulates tethering of retrograde intra-Golgi vesicles and possibly a number of other membrane trafficking events. This Schizosaccharomyces pombe (strain 972 / ATCC 24843) (Fission yeast) protein is Conserved oligomeric Golgi complex subunit 1 (cog1).